Reading from the N-terminus, the 801-residue chain is Phosphatidylinositol 3-kinase pik3 (801 aa).

One can recognise a C2 PI3K-type domain in the interval 14–166 (VTARFLVKFC…RLDGLLLKLQ (153 aa)). The PIK helical domain occupies 257-439 (DKDLKPNSKI…SSVMFLFQKE (183 aa)). Residues 515-785 (IPDACTVFKS…LINDSVSALF (271 aa)) form the PI3K/PI4K catalytic domain. The G-loop stretch occupies residues 521 to 527 (VFKSTMQ). The interval 654–662 (GVGDRHLDN) is catalytic loop. An activation loop region spans residues 673–694 (HADFGYILGRDPKLFSPAMKLS).

It belongs to the PI3/PI4-kinase family. In terms of assembly, component of the autophagy-specific vps34 PI3-kinase complex I composed of vps15, atg6, pik3/vps34, atg14 and atg38. Also a component of the VPS34 PI3-kinase complex II composed of atg6, pik3, vps15 and vps38.

The enzyme catalyses a 1,2-diacyl-sn-glycero-3-phospho-(1D-myo-inositol) + ATP = a 1,2-diacyl-sn-glycero-3-phospho-(1D-myo-inositol-3-phosphate) + ADP + H(+). In terms of biological role, phosphatidylinositol 3-kinase that functions as a part of the autophagy-specific VPS34 PI3-kinase complex I that plays a role in autophagosome assembly. This complex is essential to recruit the atg8-phosphatidylinositol conjugate and the atg12-atg5 conjugate to the pre-autophagosomal structure. Also functions as part of the VPS34 PI3-kinase complex II. The polypeptide is Phosphatidylinositol 3-kinase pik3 (pik3) (Schizosaccharomyces pombe (strain 972 / ATCC 24843) (Fission yeast)).